The following is a 199-amino-acid chain: Putative rhomboid protease YdcA (199 aa).

A run of 6 helical transmembrane segments spans residues 14–34 (LYPV…FFSL), 65–85 (ILLH…FLFA), 97–117 (FLLV…VTEP), 122–142 (HVGA…MVLF), 147–167 (IGQE…LMSF), and 172–192 (INMM…FLCV). The Nucleophile role is filled by serine 126. Histidine 177 acts as the Charge relay system in catalysis.

It belongs to the peptidase S54 family.

The protein resides in the cell membrane. This chain is Putative rhomboid protease YdcA (ydcA), found in Bacillus subtilis (strain 168).